Here is a 477-residue protein sequence, read N- to C-terminus: Glycogen synthase (477 aa).

Position 15 (Lys-15) interacts with ADP-alpha-D-glucose.

Belongs to the glycosyltransferase 1 family. Bacterial/plant glycogen synthase subfamily.

It carries out the reaction [(1-&gt;4)-alpha-D-glucosyl](n) + ADP-alpha-D-glucose = [(1-&gt;4)-alpha-D-glucosyl](n+1) + ADP + H(+). It participates in glycan biosynthesis; glycogen biosynthesis. In terms of biological role, synthesizes alpha-1,4-glucan chains using ADP-glucose. This chain is Glycogen synthase, found in Cronobacter sakazakii (strain ATCC BAA-894) (Enterobacter sakazakii).